The chain runs to 635 residues: Threonine--tRNA ligase (635 aa).

The TGS domain maps to 1 to 61; it reads MIKITLKDGK…HKDSSLEILT (61 aa). Positions 242 to 532 are catalytic; that stretch reads DHRKLGKELD…LIEQYAGAFP (291 aa). Zn(2+) is bound by residues C333, H384, and H509.

It belongs to the class-II aminoacyl-tRNA synthetase family. Homodimer. Requires Zn(2+) as cofactor.

It localises to the cytoplasm. It catalyses the reaction tRNA(Thr) + L-threonine + ATP = L-threonyl-tRNA(Thr) + AMP + diphosphate + H(+). Its function is as follows. Catalyzes the attachment of threonine to tRNA(Thr) in a two-step reaction: L-threonine is first activated by ATP to form Thr-AMP and then transferred to the acceptor end of tRNA(Thr). Also edits incorrectly charged L-seryl-tRNA(Thr). This is Threonine--tRNA ligase from Clostridium botulinum (strain ATCC 19397 / Type A).